The sequence spans 345 residues: D-fructose 1,6-bisphosphatase class 2/sedoheptulose 1,7-bisphosphatase (345 aa).

Mn(2+)-binding residues include Asp33, Glu57, Asp97, and Glu100. Substrate is bound by residues 100–102, Tyr131, 176–178, and 198–200; these read EGT, RDR, and DGD. Glu225 is a binding site for Mn(2+).

The protein belongs to the FBPase class 2 family. As to quaternary structure, homotetramer. Requires Mn(2+) as cofactor.

It carries out the reaction beta-D-fructose 1,6-bisphosphate + H2O = beta-D-fructose 6-phosphate + phosphate. The catalysed reaction is D-sedoheptulose 1,7-bisphosphate + H2O = D-sedoheptulose 7-phosphate + phosphate. Its pathway is carbohydrate biosynthesis; Calvin cycle. Its function is as follows. Catalyzes the hydrolysis of fructose 1,6-bisphosphate (Fru 1,6-P2) and sedoheptulose 1,7-bisphosphate (Sed 1,7-P2) to fructose 6-phosphate and sedoheptulose 7-phosphate, respectively. This Trichormus variabilis (strain ATCC 29413 / PCC 7937) (Anabaena variabilis) protein is D-fructose 1,6-bisphosphatase class 2/sedoheptulose 1,7-bisphosphatase.